Here is a 175-residue protein sequence, read N- to C-terminus: Protein OPG036 (175 aa).

This sequence belongs to the poxviridae OPG036 family.

It localises to the host nucleus. Plays a role in the inhibition of host innate immune response. Within the host nucleus, inhibits activation of interferon-beta promoter by inhibiting IRF3 activation. This Bos taurus (Bovine) protein is Protein OPG036 (OPG036).